Reading from the N-terminus, the 143-residue chain is Interleukin-3 (143 aa).

Residues 1–23 (MSSFPILHLLLLLLGCQVPQAQG) form the signal peptide. N-linked (GlcNAc...) asparagine glycosylation occurs at Asn79.

Belongs to the IL-3 family. Monomer.

Its subcellular location is the secreted. Functionally, granulocyte/macrophage colony-stimulating factors are cytokines that act in hematopoiesis by controlling the production, differentiation, and function of 2 related white cell populations of the blood, the granulocytes and the monocytes-macrophages. In terms of biological role, this CSF induces granulocytes, macrophages, mast cells, stem cells, erythroid cells, eosinophils and megakaryocytes. This chain is Interleukin-3 (IL3), found in Canis lupus familiaris (Dog).